Reading from the N-terminus, the 314-residue chain is Protoheme IX farnesyltransferase (314 aa).

The next 8 helical transmembrane spans lie at 30 to 50, 51 to 71, 122 to 142, 151 to 171, 178 to 198, 224 to 244, 247 to 267, and 285 to 305; these read VMSLVVFTALVGLQAAPVSVH, PVIGFASILFVAIGAGASGAL, FLAAGLLAFTIFFYAVIYSMW, IVIGGAAGAFPPVIGWVIATG, WLMFALIFMWTPPHFWALALF, IIAYTVLLAVLAVGTGFSAIG, VYLAAALVLNALFLKGAIDIW, and FFRLSLWYLFAHFGAILLESA.

It belongs to the UbiA prenyltransferase family. Protoheme IX farnesyltransferase subfamily. Interacts with CtaA.

It is found in the cell inner membrane. It catalyses the reaction heme b + (2E,6E)-farnesyl diphosphate + H2O = Fe(II)-heme o + diphosphate. The protein operates within porphyrin-containing compound metabolism; heme O biosynthesis; heme O from protoheme: step 1/1. Functionally, converts heme B (protoheme IX) to heme O by substitution of the vinyl group on carbon 2 of heme B porphyrin ring with a hydroxyethyl farnesyl side group. The protein is Protoheme IX farnesyltransferase of Roseobacter denitrificans (strain ATCC 33942 / OCh 114) (Erythrobacter sp. (strain OCh 114)).